Reading from the N-terminus, the 122-residue chain is Large ribosomal subunit protein bL12 (122 aa).

This sequence belongs to the bacterial ribosomal protein bL12 family. In terms of assembly, homodimer. Part of the ribosomal stalk of the 50S ribosomal subunit. Forms a multimeric L10(L12)X complex, where L10 forms an elongated spine to which 2 to 4 L12 dimers bind in a sequential fashion. Binds GTP-bound translation factors.

In terms of biological role, forms part of the ribosomal stalk which helps the ribosome interact with GTP-bound translation factors. Is thus essential for accurate translation. The chain is Large ribosomal subunit protein bL12 from Shewanella denitrificans (strain OS217 / ATCC BAA-1090 / DSM 15013).